We begin with the raw amino-acid sequence, 434 residues long: APETALA2-like protein 2 (434 aa).

Residues 1–116 form a disordered region; the sequence is MLLDLNVESP…KTRRGPRSRS (116 aa). Positions 12-23 are enriched in low complexity; sequence RSGTSSSSVLNS. Over residues 25–38 the composition is skewed to gly residues; it reads DAGGGGGGGGGGGL. A compositionally biased stretch (pro residues) spans 72–87; sequence LPPPPPAAPSPAPAWQ. Positions 104-113 are enriched in basic residues; it reads VAKKTRRGPR. Residues 106 to 115 carry the Nuclear localization signal motif; it reads KKTRRGPRSR. DNA-binding regions (AP2/ERF) lie at residues 118–174 and 210–267; these read QYRG…INFN and KFRG…TNFE. An EAR motif is present at residues 291–295; sequence LDLRI.

The protein belongs to the AP2/ERF transcription factor family. AP2 subfamily. As to quaternary structure, may form homodimer. Interacts with TPR2/ASP1.

Its subcellular location is the nucleus. In terms of biological role, probable transcription factor. Involved in spikelet transition. Together with SNB, controls synergistically inflorescence architecture and floral meristem establishment via the regulation of spatio-temporal expression of B- and E-function floral organ identity genes in the lodicules and of spikelet meristem genes. Prevents lemma and palea elongation as well as grain growth. This is APETALA2-like protein 2 from Oryza sativa subsp. indica (Rice).